Consider the following 141-residue polypeptide: Large ribosomal subunit protein uL16 (141 aa).

It belongs to the universal ribosomal protein uL16 family. In terms of assembly, part of the 50S ribosomal subunit.

In terms of biological role, binds 23S rRNA and is also seen to make contacts with the A and possibly P site tRNAs. This chain is Large ribosomal subunit protein uL16, found in Campylobacter fetus subsp. fetus (strain 82-40).